The primary structure comprises 989 residues: Atos homolog protein A (989 aa).

A transactivation domain 1 (TAD1) region spans residues 24–32; sequence TLLITEGRT. Disordered stretches follow at residues 244–295, 393–477, 525–639, and 656–686; these read GEGG…LPPG, PDAL…KPAT, QNEQ…GLTQ, and EAEK…TPAN. A compositionally biased stretch (low complexity) spans 254-270; that stretch reads RSSLRLPRSPLFSRSLH. Residues 397-412 are compositionally biased toward polar residues; that stretch reads FTSQEPPGHKTTWNST. Basic and acidic residues-rich tracts occupy residues 413-423 and 460-471; these read QDKECLKKSKD and TRLDRVDRESKT. 2 stretches are compositionally biased toward polar residues: residues 525–544 and 600–638; these read QNEQ…VSLS and TKSQ…NGLT. Residues 656–675 show a composition bias toward basic and acidic residues; it reads EAEKHVRDGSTCLEKDENQE. The span at 676-686 shows a compositional bias: polar residues; sequence PHSSLSSTPAN. Residues 792–849 form a required for macropage invasion region; it reads LLGNFEECVLNYRLEPLGTVEGFTAEVGASGTFCPSHMTLPVDVSFYSVSDDNAPSPY. Residues 876 to 884 form a transactivation domain 2 (TAD2) region; it reads FNPNKTVVK.

The protein belongs to the ATOS family.

The protein resides in the nucleus. Functionally, transcription regulator that syncronizes transcriptional and translational programs to promote macrophage invasion of tissues. In Danio rerio (Zebrafish), this protein is Atos homolog protein A (atosa).